Here is a 91-residue protein sequence, read N- to C-terminus: Small ribosomal subunit protein uS19 (91 aa).

It belongs to the universal ribosomal protein uS19 family.

Protein S19 forms a complex with S13 that binds strongly to the 16S ribosomal RNA. The protein is Small ribosomal subunit protein uS19 of Acinetobacter baumannii (strain AB307-0294).